A 417-amino-acid polypeptide reads, in one-letter code: Exodeoxyribonuclease 7 large subunit (417 aa).

It belongs to the XseA family. Heterooligomer composed of large and small subunits.

It is found in the cytoplasm. The enzyme catalyses Exonucleolytic cleavage in either 5'- to 3'- or 3'- to 5'-direction to yield nucleoside 5'-phosphates.. Functionally, bidirectionally degrades single-stranded DNA into large acid-insoluble oligonucleotides, which are then degraded further into small acid-soluble oligonucleotides. This is Exodeoxyribonuclease 7 large subunit from Lactococcus lactis subsp. lactis (strain IL1403) (Streptococcus lactis).